We begin with the raw amino-acid sequence, 431 residues long: Translation initiation factor 2 subunit gamma (431 aa).

The 198-residue stretch at 26-223 (QPCVNIGMVG…ALETQIPTPS (198 aa)) folds into the tr-type G domain. The segment at 35 to 42 (GHVDHGKT) is G1. D38, T42, G63, and S65 together coordinate Mg(2+). Residue 38–43 (DHGKTT) participates in GTP binding. The tract at residues 63–67 (GISIR) is G2. Zn(2+) contacts are provided by C78, C81, C93, and C96. Positions 110–113 (DAPG) are G3. GTP-binding positions include 166–169 (NKID) and 201–203 (SAQ). Residues 166–169 (NKID) form a G4 region. The interval 201-203 (SAQ) is G5.

Belongs to the TRAFAC class translation factor GTPase superfamily. Classic translation factor GTPase family. EIF2G subfamily. In terms of assembly, heterotrimer composed of an alpha, a beta and a gamma chain. Mg(2+) serves as cofactor.

The catalysed reaction is GTP + H2O = GDP + phosphate + H(+). EIF-2 functions in the early steps of protein synthesis by forming a ternary complex with GTP and initiator tRNA. The sequence is that of Translation initiation factor 2 subunit gamma from Methanosarcina mazei (strain ATCC BAA-159 / DSM 3647 / Goe1 / Go1 / JCM 11833 / OCM 88) (Methanosarcina frisia).